The primary structure comprises 1209 residues: Limbin (1209 aa).

Over Met1 to Ala200 the chain is Extracellular. Asn120 carries an N-linked (GlcNAc...) asparagine glycan. A helical transmembrane segment spans residues Gly201–Val221. Over Arg222–Asn1209 the chain is Cytoplasmic. 3 coiled-coil regions span residues Thr355–Glu394, Lys553–Asp697, and Glu920–Asp1012. A compositionally biased stretch (basic and acidic residues) spans Glu689–Gln700. The segment at Glu689–Ala714 is disordered.

As to quaternary structure, component of the EvC complex composed of EFCAB7, IQCE, EVC2 and EVC; built from two subcomplexes, EVC2:EVC and EFCAB7:IQCE. Interacts with EVC. Interacts (via N-terminal end) with EFCAB7. Interacts (via N-terminal end) with IQCE.

It localises to the cell membrane. The protein localises to the cytoplasm. Its subcellular location is the cytoskeleton. The protein resides in the cilium basal body. It is found in the cell projection. It localises to the cilium. The protein localises to the cilium membrane. Its subcellular location is the nucleus. In terms of biological role, component of the EvC complex that positively regulates ciliary Hedgehog (Hh) signaling. Plays a critical role in bone formation and skeletal development. May be involved in early embryonic morphogenesis. The polypeptide is Limbin (EVC2) (Bos taurus (Bovine)).